The following is an 801-amino-acid chain: Phosphatidylinositol 4-phosphate 5-kinase 1 (801 aa).

Positions 1–21 are cleaved as a signal peptide; the sequence is MPGLHVVSFLVVLLLQLRSSG. MORN repeat units lie at residues 41 to 63, 64 to 86, 87 to 109, 110 to 132, 133 to 155, 156 to 178, 182 to 201, and 202 to 223; these read YVGS…DGAL, YDGE…SGAS, YEGD…DGSV, YKGS…NSDT, YEGF…DGNV, YIGR…NGDT, NWLN…SGAC, and YIGT…PGSK. Residues 366–797 enclose the PIPK domain; the sequence is GHRSYYLMLN…RFISFLEKVF (432 aa).

As to expression, expressed in young seedlings, shoot and seeds, and at lower level in roots, stem and leaf.

The enzyme catalyses a 1,2-diacyl-sn-glycero-3-phospho-(1D-myo-inositol 4-phosphate) + ATP = a 1,2-diacyl-sn-glycero-3-phospho-(1D-myo-inositol-4,5-bisphosphate) + ADP + H(+). Its function is as follows. Involved in flowering. May suppress floral initiation by modifying the expression of genes related to floral induction. In Oryza sativa subsp. japonica (Rice), this protein is Phosphatidylinositol 4-phosphate 5-kinase 1 (PIPK1).